Here is a 191-residue protein sequence, read N- to C-terminus: MYQDLIRSELTEAADVLQKFLSDDHNIAQIEAAAKLIADSFKQGGKVLSCGNGGSHCDAMHFAEELTGRYRENRPGYPGIAISDPSHLSCVSNDFGYDYVFSRYVEAVGAKGDVLFGLSTSGNSGNILKAIEAAKAKGMKTIALTGKDGGKMAGLADVEIRVPHFGYADRIQEVHIKIIHIIIQLIEKEMA.

One can recognise an SIS domain in the interval 37 to 191; sequence IADSFKQGGK…IIQLIEKEMA (155 aa). 52 to 54 contacts substrate; that stretch reads NGG. 2 residues coordinate Zn(2+): His61 and Glu65. Substrate is bound by residues Glu65, 93 to 94, 119 to 121, Ser124, and Gln172; these read ND and STS. Residues Gln172 and His180 each coordinate Zn(2+).

It belongs to the SIS family. GmhA subfamily. As to quaternary structure, homotetramer. Zn(2+) serves as cofactor.

It localises to the cytoplasm. It catalyses the reaction 2 D-sedoheptulose 7-phosphate = D-glycero-alpha-D-manno-heptose 7-phosphate + D-glycero-beta-D-manno-heptose 7-phosphate. It participates in carbohydrate biosynthesis; D-glycero-D-manno-heptose 7-phosphate biosynthesis; D-glycero-alpha-D-manno-heptose 7-phosphate and D-glycero-beta-D-manno-heptose 7-phosphate from sedoheptulose 7-phosphate: step 1/1. Its pathway is bacterial outer membrane biogenesis; LPS core biosynthesis. Functionally, catalyzes the isomerization of sedoheptulose 7-phosphate in D-glycero-D-manno-heptose 7-phosphate. This is Phosphoheptose isomerase (gmhA) from Vibrio cholerae serotype O1 (strain ATCC 39315 / El Tor Inaba N16961).